Consider the following 282-residue polypeptide: Ribosomal RNA small subunit methyltransferase A (282 aa).

His11, Leu13, Gly44, Glu65, Asp90, and Asn106 together coordinate S-adenosyl-L-methionine.

Belongs to the class I-like SAM-binding methyltransferase superfamily. rRNA adenine N(6)-methyltransferase family. RsmA subfamily.

It localises to the cytoplasm. It carries out the reaction adenosine(1518)/adenosine(1519) in 16S rRNA + 4 S-adenosyl-L-methionine = N(6)-dimethyladenosine(1518)/N(6)-dimethyladenosine(1519) in 16S rRNA + 4 S-adenosyl-L-homocysteine + 4 H(+). In terms of biological role, specifically dimethylates two adjacent adenosines (A1518 and A1519) in the loop of a conserved hairpin near the 3'-end of 16S rRNA in the 30S particle. May play a critical role in biogenesis of 30S subunits. In Synechococcus sp. (strain JA-2-3B'a(2-13)) (Cyanobacteria bacterium Yellowstone B-Prime), this protein is Ribosomal RNA small subunit methyltransferase A.